Consider the following 847-residue polypeptide: Phenylalanine--tRNA ligase beta subunit (847 aa).

Positions 40-168 constitute a tRNA-binding domain; that stretch reads FGIEGPVVVG…LDPEVGADAV (129 aa). In terms of domain architecture, B5 spans 426–501; that stretch reads ADAEPIRLPD…RIVGFDRIPS (76 aa). Residues aspartate 479, aspartate 485, glutamate 488, and glutamate 489 each contribute to the Mg(2+) site. The FDX-ACB domain maps to 753-846; sequence AGFPAATQDL…AGQLFGAAIR (94 aa).

This sequence belongs to the phenylalanyl-tRNA synthetase beta subunit family. Type 1 subfamily. In terms of assembly, tetramer of two alpha and two beta subunits. Mg(2+) is required as a cofactor.

The protein localises to the cytoplasm. It catalyses the reaction tRNA(Phe) + L-phenylalanine + ATP = L-phenylalanyl-tRNA(Phe) + AMP + diphosphate + H(+). The protein is Phenylalanine--tRNA ligase beta subunit of Leifsonia xyli subsp. xyli (strain CTCB07).